Here is a 96-residue protein sequence, read N- to C-terminus: CLAVATA3/ESR (CLE)-related protein 43 (96 aa).

Residues 1–28 (MGCRDILLTFSVALLLISLFQIWLFREG) form the signal peptide. Residues 71–96 (FGLNNTNSRFEDSNRRIPSSPDRLHN) are disordered. Residue N74 is glycosylated (N-linked (GlcNAc...) asparagine). Hydroxyproline is present on residues P88 and P91. The O-linked (Ara...) hydroxyproline glycan is linked to P91.

It belongs to the CLV3/ESR signal peptide family. In terms of processing, the O-glycosylation (arabinosylation) of the hydroxyproline Pro-91 enhances binding affinity of the CLE43p peptide for its receptor. Expressed at low levels in seedlings.

It is found in the secreted. It localises to the extracellular space. Its function is as follows. Extracellular signal peptide that regulates cell fate. Promotes pollen tube growth prolongation in a SKM1 and SKM2-dependent manner, especially under relatively high temperature (at 30 degrees Celsius), thus conferring tolerance against high temperature probably through the maintenance of mitochondrial activity. The protein is CLAVATA3/ESR (CLE)-related protein 43 of Arabidopsis thaliana (Mouse-ear cress).